The chain runs to 123 residues: Large ribosomal subunit protein mL52 (123 aa).

The N-terminal 23 residues, 1 to 23 (MAALGTVLFTGVRRLHCSVAAWA), are a transit peptide targeting the mitochondrion. Residues 99–109 (QEEQRKQENAL) show a composition bias toward basic and acidic residues. Positions 99 to 123 (QEEQRKQENALKPKGASLKSPLPSQ) are disordered.

It belongs to the mitochondrion-specific ribosomal protein mL52 family. As to quaternary structure, component of the mitochondrial large ribosomal subunit (mt-LSU). Mature mammalian 55S mitochondrial ribosomes consist of a small (28S) and a large (39S) subunit. The 28S small subunit contains a 12S ribosomal RNA (12S mt-rRNA) and 30 different proteins. The 39S large subunit contains a 16S rRNA (16S mt-rRNA), a copy of mitochondrial valine transfer RNA (mt-tRNA(Val)), which plays an integral structural role, and 52 different proteins. mL52 connects the central protuberance to the body of the ribosome.

It localises to the mitochondrion. This Homo sapiens (Human) protein is Large ribosomal subunit protein mL52 (MRPL52).